The primary structure comprises 184 residues: Tumor necrosis factor receptor superfamily member 17 (184 aa).

At 1-54 (MLQMAGQCSQNEYFDSLLHACIPCQLRCSSNTPPLTCQRYCNASVTNSVKGTNA) the chain is on the extracellular side. One copy of the TNFR-Cys repeat lies at 7–41 (QCSQNEYFDSLLHACIPCQLRCSSNTPPLTCQRYC). Disulfide bonds link C8/C21, C24/C37, and C28/C41. Residues 55–77 (ILWTCLGLSLIISLAVFVLMFLL) traverse the membrane as a helical; Signal-anchor for type III membrane protein segment. Residues 78 to 184 (RKINSEPLKD…TEIEKSISAR (107 aa)) are Cytoplasmic-facing.

As to quaternary structure, associates with TRAF1, TRAF2, TRAF3, TRAF5 and TRAF6. Expressed in mature B-cells, but not in T-cells or monocytes.

The protein resides in the cell membrane. Its subcellular location is the endomembrane system. In terms of biological role, receptor for TNFSF13B/BLyS/BAFF and TNFSF13/APRIL. Promotes B-cell survival and plays a role in the regulation of humoral immunity. Activates NF-kappa-B and JNK. This chain is Tumor necrosis factor receptor superfamily member 17 (TNFRSF17), found in Homo sapiens (Human).